Reading from the N-terminus, the 320-residue chain is Malate dehydrogenase (320 aa).

NAD(+) contacts are provided by residues 10–15 (GSGMIG) and aspartate 34. Substrate is bound by residues arginine 83 and arginine 89. Residues asparagine 96 and 119-121 (ITN) each bind NAD(+). Asparagine 121 and arginine 152 together coordinate substrate. Histidine 176 functions as the Proton acceptor in the catalytic mechanism.

The protein belongs to the LDH/MDH superfamily. MDH type 3 family.

The catalysed reaction is (S)-malate + NAD(+) = oxaloacetate + NADH + H(+). Catalyzes the reversible oxidation of malate to oxaloacetate. In Brucella abortus (strain S19), this protein is Malate dehydrogenase.